A 368-amino-acid chain; its full sequence is D-alanine--D-alanine ligase (368 aa).

In terms of domain architecture, ATP-grasp spans 151 to 358; the sequence is KKLLAAEGLP…YGTLVSTLVD (208 aa). Residue 179–234 coordinates ATP; the sequence is RSRLHLPVFVKPARGGSSIGITRVAEWAALDDAIAHARRHDPKVIVESGIAGREVE. Mg(2+) is bound by residues D313, E325, and N327.

This sequence belongs to the D-alanine--D-alanine ligase family. Mg(2+) serves as cofactor. It depends on Mn(2+) as a cofactor.

The protein resides in the cytoplasm. It catalyses the reaction 2 D-alanine + ATP = D-alanyl-D-alanine + ADP + phosphate + H(+). The protein operates within cell wall biogenesis; peptidoglycan biosynthesis. Cell wall formation. This chain is D-alanine--D-alanine ligase, found in Rhodococcus opacus (strain B4).